The sequence spans 147 residues: Hemoglobin subunit epsilon (147 aa).

One can recognise a Globin domain in the interval 3-147 (HFTAEEKSTI…VATALAHKYH (145 aa)). Phosphoserine is present on residues S14 and S51. H64 and H93 together coordinate heme b.

It belongs to the globin family. In terms of assembly, heterotetramer of two alpha chains and two epsilon chains in early embryonic hemoglobin Gower-2; two zeta chains and two epsilon chains in early embryonic hemoglobin Gower-1. As to expression, red blood cells.

The epsilon chain is a beta-type chain of early mammalian embryonic hemoglobin. The polypeptide is Hemoglobin subunit epsilon (HBE1) (Microcebus murinus (Gray mouse lemur)).